The following is a 627-amino-acid chain: Pentatricopeptide repeat-containing protein At2g15630, mitochondrial (627 aa).

A mitochondrion-targeting transit peptide spans 1–29 (MRRFTVPCILRHRISILSGAGYSPAAARL). PPR repeat units lie at residues 154 to 188 (STILFDLLVRCCCQLRMVDEAIECFYLMKEKGFYP), 189 to 223 (KTETCNHILTLLSRLNRIENAWVFYADMYRMEIKS), 224 to 258 (NVYTFNIMINVLCKEGKLKKAKGFLGIMEVFGIKP), 259 to 293 (TIVTYNTLVQGFSLRGRIEGARLIISEMKSKGFQP), 294 to 324 (DMQTYNPILSWMCNEGRASEVLREMKEIGLV), 326 to 360 (DSVSYNILIRGCSNNGDLEMAFAYRDEMVKQGMVP), 361 to 395 (TFYTYNTLIHGLFMENKIEAAEILIREIREKGIVL), 396 to 430 (DSVTYNILINGYCQHGDAKKAFALHDEMMTDGIQP), 431 to 465 (TQFTYTSLIYVLCRKNKTREADELFEKVVGKGMKP), 466 to 500 (DLVMMNTLMDGHCAIGNMDRAFSLLKEMDMMSINP), 501 to 535 (DDVTYNCLMRGLCGEGKFEEARELMGEMKRRGIKP), 536 to 570 (DHISYNTLISGYSKKGDTKHAFMVRDEMLSLGFNP), and 571 to 605 (TLLTYNALLKGLSKNQEGELAEELLREMKSEGIVP).

Belongs to the PPR family. P subfamily.

It localises to the mitochondrion. This is Pentatricopeptide repeat-containing protein At2g15630, mitochondrial from Arabidopsis thaliana (Mouse-ear cress).